The chain runs to 726 residues: Pyrroloquinoline quinone-dependent pyranose dehydrogenase (726 aa).

The signal sequence occupies residues 1-18; sequence MRSSSLAWALGLVALANA. Residues Met-83 and Tyr-108 each coordinate heme b. Residues Cys-138 and Cys-141 are joined by a disulfide bond. The N-linked (GlcNAc...) asparagine glycan is linked to Asn-140. The heme b site is built by Arg-181 and His-182. Residues 211–242 form a disordered region; the sequence is PPLSGGAPTQPPTQQPPTTTAPPPPPPSSTFV. Residues 219-238 show a composition bias toward pro residues; that stretch reads TQPPTQQPPTTTAPPPPPPS. An intrachain disulfide couples Cys-244 to Cys-302. Arg-273, His-363, Arg-430, and Asn-431 together coordinate pyrroloquinoline quinone. Residues Ser-449 and Asp-451 each contribute to the Ca(2+) site. A disulfide bridge connects residues Cys-492 and Cys-525. Pyrroloquinoline quinone is bound at residue His-539. Asn-551 carries N-linked (GlcNAc...) asparagine glycosylation. Residues His-560, Trp-563, and Asn-564 each coordinate pyrroloquinoline quinone. A disulfide bond links Cys-611 and Cys-619. Arg-621 contributes to the pyrroloquinoline quinone binding site. A compositionally biased stretch (pro residues) spans 659–678; it reads ITQPPITTSPPTPTTPPVVQ. Residues 659 to 689 are disordered; that stretch reads ITQPPITTSPPTPTTPPVVQPPTTVAPPQAS. Low complexity predominate over residues 679–689; that stretch reads PPTTVAPPQAS. The region spanning 688-724 is the CBM1 domain; that stretch reads ASQTLWGQCGGQGWTGPTLCPANSVCRESNQWYSQCV.

It belongs to the sugar dehydrogenase AA12 family. Requires Ca(2+) as cofactor. It depends on pyrroloquinoline quinone as a cofactor. Heme b serves as cofactor.

It localises to the secreted. Pyrroloquinoline quinone (PPQ)-dependent oxidoreductase that catalyzes the oxidation of various sugars including L-galactose, L-gulose, D-talose, D-arabinose, D-lyxose, L-fucose and D-glucosone. Shows significant activity toward the reverse-chair conformation of pyranoses. Shows little or no activity toward abundant sugars such as D-glucose, D-fructose, cellobiose, as well L-xylose and L-glucose. This enzyme is able to direct electrical communication with electrodes, without artificial electron mediators, thus allowing direct electron transfer (DET)-type bioelectrocatalysis. Exhibits binding affinity for insoluble cellulose. PDH does not oxidize cello-oligosaccharides but is able to activate the C-1-oxidizing Neurospora crassa LPMO9F and the C-4-oxidizing Neurospora crassa LPMO9C thanks to the electron-tranfer activity of the cytochrome domain and the localization of PDH in the vicinity of the LPMO substrates by the CBM1 domain. This is Pyrroloquinoline quinone-dependent pyranose dehydrogenase from Coprinopsis cinerea (strain Okayama-7 / 130 / ATCC MYA-4618 / FGSC 9003) (Inky cap fungus).